A 318-amino-acid chain; its full sequence is Acetyl-coenzyme A carboxylase carboxyl transferase subunit alpha (318 aa).

A CoA carboxyltransferase C-terminal domain is found at 38-292 (KLEKRLAKLE…NKTITKSLHA (255 aa)).

This sequence belongs to the AccA family. Acetyl-CoA carboxylase is a heterohexamer composed of biotin carboxyl carrier protein (AccB), biotin carboxylase (AccC) and two subunits each of ACCase subunit alpha (AccA) and ACCase subunit beta (AccD).

Its subcellular location is the cytoplasm. It catalyses the reaction N(6)-carboxybiotinyl-L-lysyl-[protein] + acetyl-CoA = N(6)-biotinyl-L-lysyl-[protein] + malonyl-CoA. It functions in the pathway lipid metabolism; malonyl-CoA biosynthesis; malonyl-CoA from acetyl-CoA: step 1/1. Functionally, component of the acetyl coenzyme A carboxylase (ACC) complex. First, biotin carboxylase catalyzes the carboxylation of biotin on its carrier protein (BCCP) and then the CO(2) group is transferred by the carboxyltransferase to acetyl-CoA to form malonyl-CoA. In Listeria welshimeri serovar 6b (strain ATCC 35897 / DSM 20650 / CCUG 15529 / CIP 8149 / NCTC 11857 / SLCC 5334 / V8), this protein is Acetyl-coenzyme A carboxylase carboxyl transferase subunit alpha.